The primary structure comprises 47 residues: PhoP/PhoQ regulator MgrB (47 aa).

A helical transmembrane segment spans residues W6 to V26.

It belongs to the MgrB family. In terms of assembly, may form homooligomers. Probably interacts with the periplasmic domain of PhoQ.

Its subcellular location is the cell inner membrane. Its function is as follows. PhoP-regulated transcription is redox-sensitive, being activated when the periplasm becomes more reducing. MgrB acts between DsbA/DsbB and PhoP/PhoQ in this pathway. Represses PhoP/PhoQ signaling, possibly by binding to the periplasmic domain of PhoQ, altering its activity and that of downstream effector PhoP. This chain is PhoP/PhoQ regulator MgrB, found in Cronobacter sakazakii (strain ATCC BAA-894) (Enterobacter sakazakii).